Consider the following 63-residue polypeptide: Large ribosomal subunit protein uL29 (63 aa).

This sequence belongs to the universal ribosomal protein uL29 family.

The sequence is that of Large ribosomal subunit protein uL29 from Proteus mirabilis (strain HI4320).